The primary structure comprises 626 residues: (R)-linalool synthase 2, chloroplastic (626 aa).

A chloroplast-targeting transit peptide spans 1 to 21; sequence MAFVSIAPLASRCCVHKSFVS. Mg(2+) contacts are provided by aspartate 377, aspartate 381, and glutamate 529. The DDXXD motif signature appears at 377–381; that stretch reads DDIYD.

This sequence belongs to the terpene synthase family. Tpsd subfamily. The cofactor is Mg(2+). Mn(2+) is required as a cofactor.

The protein localises to the plastid. Its subcellular location is the chloroplast. The enzyme catalyses (2E)-geranyl diphosphate + H2O = (R)-linalool + diphosphate. Its pathway is terpene metabolism; oleoresin biosynthesis. Terpene synthase (mono-TPS) involved in the biosynthesis of monoterpene natural products included in conifer oleoresin secretions and volatile emissions; these compounds contribute to biotic and abiotic stress defense against herbivores and pathogens. Catalyzes the conversion of (2E)-geranyl diphosphate (GPP) to (R)-linalool. The protein is (R)-linalool synthase 2, chloroplastic of Picea sitchensis (Sitka spruce).